The following is a 106-amino-acid chain: SDO1-like protein C21C3.19 (106 aa).

This sequence belongs to the SDO1-like family.

The protein localises to the cytoplasm. The protein resides in the nucleus. In terms of biological role, may play a role in RNA metabolism. The sequence is that of SDO1-like protein C21C3.19 from Schizosaccharomyces pombe (strain 972 / ATCC 24843) (Fission yeast).